The sequence spans 380 residues: Pectinesterase QRT1 (380 aa).

The signal sequence occupies residues 1–26 (MKVEAFIPAVLLLCFGVMLCLKSSCA). N-linked (GlcNAc...) asparagine glycans are attached at residues asparagine 74 and asparagine 137. Threonine 164 and glutamine 198 together coordinate substrate. Aspartate 221 functions as the Proton donor in the catalytic mechanism. An N-linked (GlcNAc...) asparagine glycan is attached at asparagine 227. Cysteine 235 and cysteine 255 are joined by a disulfide. The Nucleophile role is filled by aspartate 242. 2 residues coordinate substrate: arginine 298 and tryptophan 300. Asparagine 302 carries an N-linked (GlcNAc...) asparagine glycan.

This sequence belongs to the pectinesterase family. As to expression, expressed in flower buds, siliques, developing guard cells, floral nectares, at the stigmatic surface, in the hypocotyl-root transition zone and the area of lateral root emergence. Not expressed in mature leaves.

Its subcellular location is the secreted. It localises to the cell wall. The catalysed reaction is [(1-&gt;4)-alpha-D-galacturonosyl methyl ester](n) + n H2O = [(1-&gt;4)-alpha-D-galacturonosyl](n) + n methanol + n H(+). The protein operates within glycan metabolism; pectin degradation; 2-dehydro-3-deoxy-D-gluconate from pectin: step 1/5. Functionally, pectinesterase required for cell type-specific pectin degradation to separate microspores. The chain is Pectinesterase QRT1 from Arabidopsis thaliana (Mouse-ear cress).